Here is a 282-residue protein sequence, read N- to C-terminus: Ribosome biogenesis GTPase A (282 aa).

Positions 14 to 178 (RREVTEKLKL…LLDTPGILWP (165 aa)) constitute a CP-type G domain. GTP contacts are provided by residues 58 to 61 (NKAD), 86 to 87 (NS), 130 to 135 (NVGKST), and G174.

The protein belongs to the TRAFAC class YlqF/YawG GTPase family. MTG1 subfamily. Interacts with ctc. Interacts with the immature 50S ribosome subunit. 2 molecules of RbgA bind to one 50S subunit.

Its subcellular location is the cytoplasm. Functionally, essential protein that is required for a late step of 50S ribosomal subunit assembly. Has GTPase activity that is stimulated by interaction with the immature 50S ribosome subunit. Binds to the 23S rRNA. Required for the association of ribosomal proteins RplP and RpmA with the large subunit. The polypeptide is Ribosome biogenesis GTPase A (rbgA) (Bacillus subtilis (strain 168)).